An 86-amino-acid chain; its full sequence is MNSLLMITACLVLIGTVWAKDGYLVEKTGCKKTCYKLGENDFCNRECKWKHIGGSYGYCYGFGCYCEGLPDSTQTWPLPNKTCGKK.

The first 19 residues, 1–19 (MNSLLMITACLVLIGTVWA), serve as a signal peptide directing secretion. In terms of domain architecture, LCN-type CS-alpha/beta spans 20 to 84 (KDGYLVEKTG…TWPLPNKTCG (65 aa)). Cystine bridges form between Cys30/Cys83, Cys34/Cys59, Cys43/Cys64, and Cys47/Cys66. Residue Cys83 is modified to Cysteine amide.

It belongs to the long (4 C-C) scorpion toxin superfamily. Sodium channel inhibitor family. Beta subfamily. Expressed by the venom gland.

The protein resides in the secreted. In terms of biological role, beta toxins bind voltage-independently at site-4 of sodium channels (Nav) and shift the voltage of activation toward more negative potentials thereby affecting sodium channel activation and promoting spontaneous and repetitive firing. Affects channels from chicken and frog. This is Beta-toxin CsEI from Centruroides sculpturatus (Arizona bark scorpion).